The primary structure comprises 202 residues: Dephospho-CoA kinase (202 aa).

Residues 5–202 (VIGLTGGIGS…KKYLTLTKMV (198 aa)) enclose the DPCK domain. Residue 13 to 18 (GSGKTT) participates in ATP binding.

This sequence belongs to the CoaE family.

It localises to the cytoplasm. It carries out the reaction 3'-dephospho-CoA + ATP = ADP + CoA + H(+). It participates in cofactor biosynthesis; coenzyme A biosynthesis; CoA from (R)-pantothenate: step 5/5. Its function is as follows. Catalyzes the phosphorylation of the 3'-hydroxyl group of dephosphocoenzyme A to form coenzyme A. In Colwellia psychrerythraea (strain 34H / ATCC BAA-681) (Vibrio psychroerythus), this protein is Dephospho-CoA kinase.